Consider the following 225-residue polypeptide: uncharacterized protein (225 aa).

Transmembrane regions (helical) follow at residues 1–21 (MFIG…AKKV), 31–51 (SPLL…NVPY), 56–76 (LGGG…AIPL), 88–108 (VEII…TALI), 145–165 (VTAV…PMVI), and 205–225 (VSMI…LSFM).

The protein belongs to the YohK (E.coli)/YwbG (IPA-22R) (B.subtilis) family.

The protein localises to the cell membrane. This is an uncharacterized protein from Bacillus subtilis (strain 168).